A 126-amino-acid polypeptide reads, in one-letter code: DNA-directed RNA polymerase subunit omega (126 aa).

It belongs to the RNA polymerase subunit omega family. As to quaternary structure, the RNAP catalytic core consists of 2 alpha, 1 beta, 1 beta' and 1 omega subunit. When a sigma factor is associated with the core the holoenzyme is formed, which can initiate transcription.

The enzyme catalyses RNA(n) + a ribonucleoside 5'-triphosphate = RNA(n+1) + diphosphate. Its function is as follows. Promotes RNA polymerase assembly. Latches the N- and C-terminal regions of the beta' subunit thereby facilitating its interaction with the beta and alpha subunits. This Rickettsia felis (strain ATCC VR-1525 / URRWXCal2) (Rickettsia azadi) protein is DNA-directed RNA polymerase subunit omega.